We begin with the raw amino-acid sequence, 710 residues long: Polyribonucleotide nucleotidyltransferase (710 aa).

Positions 489 and 495 each coordinate Mg(2+). The 60-residue stretch at 556-615 folds into the KH domain; the sequence is PKIDTIKIDVDKIKVVIGKGGETIDKIIAETGVKIDIDDEGNVSIYSSDQAAINRTKEII. One can recognise an S1 motif domain in the interval 625 to 693; the sequence is GEVYHAKVVR…EKGRVDASMK (69 aa). The tract at residues 691 to 710 is disordered; that stretch reads SMKALIPRPPKPEKKEEKHD. Basic and acidic residues predominate over residues 700 to 710; sequence PKPEKKEEKHD.

Belongs to the polyribonucleotide nucleotidyltransferase family. Mg(2+) serves as cofactor.

It is found in the cytoplasm. The enzyme catalyses RNA(n+1) + phosphate = RNA(n) + a ribonucleoside 5'-diphosphate. Its function is as follows. Involved in mRNA degradation. Catalyzes the phosphorolysis of single-stranded polyribonucleotides processively in the 3'- to 5'-direction. In Streptococcus pyogenes serotype M2 (strain MGAS10270), this protein is Polyribonucleotide nucleotidyltransferase.